Reading from the N-terminus, the 608-residue chain is Prolactin receptor (608 aa).

An N-terminal signal peptide occupies residues 1–19 (MSSALAYMLLVLSISLLNG). Residues 20–229 (QSPPGKPEIH…EIPNDFTLKD (210 aa)) lie on the Extracellular side of the membrane. Fibronectin type-III domains lie at 22–122 (PPGK…IVEP) and 124–224 (PPRN…IPND). Cys-31 and Cys-41 are oxidised to a cystine. N-linked (GlcNAc...) asparagine glycosylation occurs at Asn-54. Cysteines 70 and 81 form a disulfide. Asn-99 and Asn-127 each carry an N-linked (GlcNAc...) asparagine glycan. 2 residues coordinate Zn(2+): Asp-206 and His-207. Residues 210–214 (WSRWG) carry the WSXWS motif motif. The helical transmembrane segment at 230 to 253 (TTVWIIVAVLSAVICLIMVWAVAL) threads the bilayer. The Cytoplasmic segment spans residues 254-608 (KGYSMMTCIF…DPTCFMHSFH (355 aa)). A Box 1 motif motif is present at residues 262–270 (IFPPVPGPK). 3 disordered regions span residues 317-355 (DERLMPSHSKEYPGQGVKPTHLDPDSDSGHGSYDSHSLL), 377-419 (KPEN…TRRS), and 466-487 (GAKSFPSDKQNTSWPPLQEKGP). Positions 318-327 (ERLMPSHSKE) are enriched in basic and acidic residues. Residues 345 to 354 (GHGSYDSHSL) are compositionally biased toward low complexity. A compositionally biased stretch (polar residues) spans 398–408 (CHTDTSKSTTW).

It belongs to the type I cytokine receptor family. Type 1 subfamily. Interacts with SMARCA1. Interacts with NEK3 and VAV2 and this interaction is prolactin-dependent.

It is found in the membrane. This is a receptor for the anterior pituitary hormone prolactin. The sequence is that of Prolactin receptor (Prlr) from Mus musculus (Mouse).